Reading from the N-terminus, the 124-residue chain is Small ribosomal subunit protein uS12cz/uS12cy (124 aa).

The protein belongs to the universal ribosomal protein uS12 family. In terms of assembly, part of the 30S ribosomal subunit.

The protein resides in the plastid. It is found in the chloroplast. Functionally, with S4 and S5 plays an important role in translational accuracy. Located at the interface of the 30S and 50S subunits. This is Small ribosomal subunit protein uS12cz/uS12cy (rps12-A) from Agrostis stolonifera (Creeping bentgrass).